The chain runs to 469 residues: MYTYMEYLQKCFYKSTNWNEDNIFSNITASSSAILDFPIPTGFKLDSSNKSTEYSASSFTLSNYHSINGSLAYLYSSVPLRNTMGTKEISLQDALVGFRIIEPSSNNHKQLSSSKRHDRSSLLYGRMYFPGSALEAMIIKRISAHTQLLIKCINNPHMDKNGTMIVYLQKNAPKYSREFIYSTNESLIGFRCLYNLGNSDNSLNTALIPKFDNSVISIGTELWYAARTMSPGLSTAFRYSTRSTSTGKPLTMTLAVNPILGHLSSTYTVKTSVASTFSSRYDFNFFSYASNLSLGFELYNYSRENPVHSFANRSVNLSSEENRFLSHQDRKVRGQHGGNTIPIRSHTSIAQKDHSNMIINPIQNLDNYYHINPTLLPEKKKLLDEVELAAHLSSENSESVTTAFQNLVNESDFASVVKFSTSLNDRMVKILWEGRVKDFLVSTGVKVGMNPVTNAPEFNRFGVSFSYAC.

Belongs to the MDM10 family. In terms of assembly, component of the ER-mitochondria encounter structure (ERMES) or MDM complex, composed of MMM1, MDM10, MDM12 and MDM34. Associates with the mitochondrial outer membrane sorting assembly machinery SAM(core) complex.

Its subcellular location is the mitochondrion outer membrane. Component of the ERMES/MDM complex, which serves as a molecular tether to connect the endoplasmic reticulum and mitochondria. Components of this complex are involved in the control of mitochondrial shape and protein biogenesis and may function in phospholipid exchange. MDM10 is involved in the late assembly steps of the general translocase of the mitochondrial outer membrane (TOM complex). Functions in the TOM40-specific route of the assembly of outer membrane beta-barrel proteins, including the association of TOM40 with the receptor TOM22 and small TOM proteins. Can associate with the SAM(core) complex as well as the MDM12-MMM1 complex, both involved in late steps of the major beta-barrel assembly pathway, that is responsible for biogenesis of all outer membrane beta-barrel proteins. May act as a switch that shuttles between both complexes and channels precursor proteins into the TOM40-specific pathway. Plays a role in mitochondrial morphology and in the inheritance of mitochondria. The polypeptide is Mitochondrial distribution and morphology protein 10 (Scheffersomyces stipitis (strain ATCC 58785 / CBS 6054 / NBRC 10063 / NRRL Y-11545) (Yeast)).